Consider the following 227-residue polypeptide: Pyridoxal 5'-phosphate synthase subunit PdxT (227 aa).

Glycine 52 to serine 54 contacts L-glutamine. Catalysis depends on cysteine 84, which acts as the Nucleophile. L-glutamine is bound by residues arginine 118 and isoleucine 149 to arginine 150. Residues histidine 189 and glutamate 191 each act as charge relay system in the active site.

This sequence belongs to the glutaminase PdxT/SNO family. As to quaternary structure, in the presence of PdxS, forms a dodecamer of heterodimers. Only shows activity in the heterodimer.

It carries out the reaction aldehydo-D-ribose 5-phosphate + D-glyceraldehyde 3-phosphate + L-glutamine = pyridoxal 5'-phosphate + L-glutamate + phosphate + 3 H2O + H(+). The enzyme catalyses L-glutamine + H2O = L-glutamate + NH4(+). It participates in cofactor biosynthesis; pyridoxal 5'-phosphate biosynthesis. Catalyzes the hydrolysis of glutamine to glutamate and ammonia as part of the biosynthesis of pyridoxal 5'-phosphate. The resulting ammonia molecule is channeled to the active site of PdxS. In Renibacterium salmoninarum (strain ATCC 33209 / DSM 20767 / JCM 11484 / NBRC 15589 / NCIMB 2235), this protein is Pyridoxal 5'-phosphate synthase subunit PdxT.